The primary structure comprises 704 residues: Ion-translocating oxidoreductase complex subunit C (704 aa).

4Fe-4S ferredoxin-type domains are found at residues 368–397 (MGAP…QQLY) and 407–436 (KATA…VQYF). [4Fe-4S] cluster contacts are provided by Cys377, Cys380, Cys383, Cys387, Cys416, Cys419, Cys422, and Cys426. Positions 535–684 (ARAKQAAHPM…PADPRKAAVA (150 aa)) are disordered. Residues 556 to 565 (KAAVEAAIAR) show a composition bias toward low complexity.

Belongs to the 4Fe4S bacterial-type ferredoxin family. RnfC subfamily. In terms of assembly, the complex is composed of six subunits: RsxA, RsxB, RsxC, RsxD, RsxE and RsxG. It depends on [4Fe-4S] cluster as a cofactor.

It is found in the cell inner membrane. Functionally, part of a membrane-bound complex that couples electron transfer with translocation of ions across the membrane. Required to maintain the reduced state of SoxR. This is Ion-translocating oxidoreductase complex subunit C from Salmonella paratyphi C (strain RKS4594).